The chain runs to 189 residues: UPF0301 protein RAF_ORF0041 (189 aa).

The protein belongs to the UPF0301 (AlgH) family.

This chain is UPF0301 protein RAF_ORF0041, found in Rickettsia africae (strain ESF-5).